Reading from the N-terminus, the 264-residue chain is uncharacterized protein (264 aa).

4 helical membrane-spanning segments follow: residues 43–63 (VVAA…LYLI), 68–88 (FLPS…LLGI), 96–116 (ILPA…LGCI), and 150–170 (LAAK…VLAV). The segment at 216–247 (SYEDALKNSSQQPSTSSSSSSPPSRPPHSVYT) is disordered. The segment covering 224–237 (SSQQPSTSSSSSSP) has biased composition (low complexity).

The protein localises to the membrane. This is an uncharacterized protein from Caenorhabditis elegans.